We begin with the raw amino-acid sequence, 227 residues long: MASSMAPAAAMAILLLALLMPATLCSRSGPPSSKHGHGGHAKRAPPPASPVVPVAPQAAALVRATCNSTAYYDVCVSALAADPSSTTADVRGLSAIAVSVAAANASGAAQAAAALANGTAPLAAAAAGDGTVQALLRACAGKYGDARDALAAAKESMGQQDYDLATVHVSAGAEYPQVCKALFRRQRPGAYPAELAAREEALNKLCSVALDIIALLTSSPASNNNNS.

An N-terminal signal peptide occupies residues 1–25 (MASSMAPAAAMAILLLALLMPATLC). Residues 28–50 (SGPPSSKHGHGGHAKRAPPPASP) are disordered. Residues 34 to 43 (KHGHGGHAKR) show a composition bias toward basic residues. An intrachain disulfide couples cysteine 66 to cysteine 75. 3 N-linked (GlcNAc...) asparagine glycosylation sites follow: asparagine 67, asparagine 104, and asparagine 117. A disulfide bridge links cysteine 139 with cysteine 179.

The protein belongs to the PMEI family. In terms of tissue distribution, expressed in roots, leaves, culms and flag leaves.

It is found in the secreted. The protein localises to the extracellular space. Its subcellular location is the apoplast. Its function is as follows. Pectin methylesterase (PME) inhibitor that inhibits PME in vitro. Functions as a critical structural modulator by regulating the degree of pectin methylesterification and the physiochemical properties of the cell wall components. The polypeptide is Pectinesterase inhibitor 28 (Oryza sativa subsp. japonica (Rice)).